The following is a 484-amino-acid chain: Protein nucleotidyltransferase YdiU (484 aa).

Positions 81, 83, 84, 103, 115, 116, 166, and 173 each coordinate ATP. Asp244 functions as the Proton acceptor in the catalytic mechanism. The Mg(2+) site is built by Asn245 and Asp254. Position 254 (Asp254) interacts with ATP.

It belongs to the SELO family. Mg(2+) is required as a cofactor. The cofactor is Mn(2+).

The enzyme catalyses L-seryl-[protein] + ATP = 3-O-(5'-adenylyl)-L-seryl-[protein] + diphosphate. The catalysed reaction is L-threonyl-[protein] + ATP = 3-O-(5'-adenylyl)-L-threonyl-[protein] + diphosphate. It carries out the reaction L-tyrosyl-[protein] + ATP = O-(5'-adenylyl)-L-tyrosyl-[protein] + diphosphate. It catalyses the reaction L-histidyl-[protein] + UTP = N(tele)-(5'-uridylyl)-L-histidyl-[protein] + diphosphate. The enzyme catalyses L-seryl-[protein] + UTP = O-(5'-uridylyl)-L-seryl-[protein] + diphosphate. The catalysed reaction is L-tyrosyl-[protein] + UTP = O-(5'-uridylyl)-L-tyrosyl-[protein] + diphosphate. Its function is as follows. Nucleotidyltransferase involved in the post-translational modification of proteins. It can catalyze the addition of adenosine monophosphate (AMP) or uridine monophosphate (UMP) to a protein, resulting in modifications known as AMPylation and UMPylation. The chain is Protein nucleotidyltransferase YdiU from Shewanella sp. (strain MR-7).